The sequence spans 552 residues: AP-1-like transcription factor (552 aa).

Residues 1 to 14 are compositionally biased toward polar residues; sequence MSGQTETLSSTSNI. The tract at residues 1–99 is disordered; the sequence is MSGQTETLSS…QRAFRKRKED (99 aa). A compositionally biased stretch (basic and acidic residues) spans 36–47; sequence PVSDRSSRRTSS. A compositionally biased stretch (acidic residues) spans 48 to 61; sequence EEVDLMPNVDDEVD. Positions 62–80 are enriched in basic and acidic residues; that stretch reads GDVKPKKIGRKNSDQEPSS. In terms of domain architecture, bZIP spans 76-139; the sequence is QEPSSKRKAQ…RQLEEELRIL (64 aa). The Nuclear localization signal motif lies at 81 to 88; the sequence is KRKAQNRA. Residues 81 to 102 form a basic motif region; that stretch reads KRKAQNRAAQRAFRKRKEDHLK. Residues 104-111 form a leucine-zipper region; sequence LETQVVTL. The interval 213–244 is disordered; sequence QVPPTLVDSNSAQGTLSPETPSSSDSPSNLYL. Residues 219–228 are compositionally biased toward polar residues; that stretch reads VDSNSAQGTL. Residues 229–240 show a composition bias toward low complexity; that stretch reads SPETPSSSDSPS. Positions 259-290 are n-CRD; that stretch reads CSALSNGENGEDVADGKQFCQKLSTACGSIAC. 2 disulfides stabilise this stretch: C278/C501 and C285/C532. The interval 460–489 is disordered; that stretch reads ISNHPDEVPPDGLPQKGKHDTSSQMPSENE. The interval 501 to 532 is c-CRD; it reads CPKVWSKIINHPRFESFDIDDLCSKLKNKAKC. Positions 515-533 match the Nuclear export signal motif; sequence ESFDIDDLCSKLKNKAKCS.

It belongs to the bZIP family. YAP subfamily. In terms of assembly, homodimer. The reduced form of pap1 interacts in the nucleus with the nuclear export protein crm1, and in the cytoplasm with the peroxiredoxin tpx1. In terms of processing, depending on the oxidative stress inducing agent, pap1 can undergo two distinct conformational changes, both masking the nuclear export signal, thus abolishing nuclear export by crm1/exportin 1. The glutathione-depleting agent diethylmaleate (DEM) leads to the non-reversible modification of at least 2 cysteine residues in the c-CRD. Peroxide stress induces the formation of a tpx1-dependent interdomain disulfide bond between Cys-278 and Cys-501.

Its subcellular location is the nucleus. It is found in the cytoplasm. In terms of biological role, transcription activator involved in multidrug resistance, oxidative stress response, and redox homeostasis. Regulates the transcription of genes encoding antioxidant enzymes like catalase ctt1 and components of the cellular thiol-reducing pathways, including the thioredoxin system (trx2, trr1), ABC transporters involved in multidrug resistance like bfr1/hba2 and pmd1 as well as the gene obr1/apt1. Preferentially binds to promoters with the core binding site 5'-TTA[CG]TAA-3'. Activity of the transcription factor is controlled through oxidation of specific cysteine residues resulting in the alteration of its subcellular location. Oxidative stress induces nuclear accumulation and as a result pap1 transcriptional activity. Required for sty1/spc1-conferred staurosporine resistance. This Schizosaccharomyces pombe (strain 972 / ATCC 24843) (Fission yeast) protein is AP-1-like transcription factor (pap1).